Reading from the N-terminus, the 139-residue chain is Large ribosomal subunit protein bL21 (139 aa).

The protein belongs to the bacterial ribosomal protein bL21 family. As to quaternary structure, part of the 50S ribosomal subunit. Contacts protein L20.

Its function is as follows. This protein binds to 23S rRNA in the presence of protein L20. The chain is Large ribosomal subunit protein bL21 from Prochlorococcus marinus (strain NATL1A).